Reading from the N-terminus, the 750-residue chain is Ribosomal RNA large subunit methyltransferase K/L (750 aa).

Positions 46–157 (TAYRLCLWSR…RGEAILSLDL (112 aa)) constitute a THUMP domain.

This sequence belongs to the methyltransferase superfamily. RlmKL family.

It is found in the cytoplasm. The catalysed reaction is guanosine(2445) in 23S rRNA + S-adenosyl-L-methionine = N(2)-methylguanosine(2445) in 23S rRNA + S-adenosyl-L-homocysteine + H(+). The enzyme catalyses guanosine(2069) in 23S rRNA + S-adenosyl-L-methionine = N(2)-methylguanosine(2069) in 23S rRNA + S-adenosyl-L-homocysteine + H(+). Its function is as follows. Specifically methylates the guanine in position 2445 (m2G2445) and the guanine in position 2069 (m7G2069) of 23S rRNA. The protein is Ribosomal RNA large subunit methyltransferase K/L of Pseudomonas syringae pv. tomato (strain ATCC BAA-871 / DC3000).